Here is a 333-residue protein sequence, read N- to C-terminus: Anthranilate phosphoribosyltransferase (333 aa).

5-phospho-alpha-D-ribose 1-diphosphate-binding positions include glycine 81, 84–85 (GD), threonine 89, 91–94 (NIST), 109–117 (KHGNRSVSS), and serine 121. Glycine 81 contributes to the anthranilate binding site. Mg(2+) is bound at residue serine 93. Asparagine 112 is an anthranilate binding site. Residue arginine 167 participates in anthranilate binding. Mg(2+) is bound by residues aspartate 225 and glutamate 226.

The protein belongs to the anthranilate phosphoribosyltransferase family. Homodimer. Mg(2+) is required as a cofactor.

The enzyme catalyses N-(5-phospho-beta-D-ribosyl)anthranilate + diphosphate = 5-phospho-alpha-D-ribose 1-diphosphate + anthranilate. It participates in amino-acid biosynthesis; L-tryptophan biosynthesis; L-tryptophan from chorismate: step 2/5. Its function is as follows. Catalyzes the transfer of the phosphoribosyl group of 5-phosphorylribose-1-pyrophosphate (PRPP) to anthranilate to yield N-(5'-phosphoribosyl)-anthranilate (PRA). The polypeptide is Anthranilate phosphoribosyltransferase (Glaesserella parasuis serovar 5 (strain SH0165) (Haemophilus parasuis)).